Consider the following 464-residue polypeptide: Kynureninase 2 (464 aa).

Residues leucine 135, threonine 136, 163 to 166 (FPSD), aspartate 248, histidine 251, and tyrosine 273 contribute to the pyridoxal 5'-phosphate site. At lysine 274 the chain carries N6-(pyridoxal phosphate)lysine. 2 residues coordinate pyridoxal 5'-phosphate: tryptophan 313 and asparagine 341.

The protein belongs to the kynureninase family. As to quaternary structure, homodimer. Pyridoxal 5'-phosphate is required as a cofactor.

The protein localises to the cytoplasm. It carries out the reaction L-kynurenine + H2O = anthranilate + L-alanine + H(+). The enzyme catalyses 3-hydroxy-L-kynurenine + H2O = 3-hydroxyanthranilate + L-alanine + H(+). It functions in the pathway amino-acid degradation; L-kynurenine degradation; L-alanine and anthranilate from L-kynurenine: step 1/1. The protein operates within cofactor biosynthesis; NAD(+) biosynthesis; quinolinate from L-kynurenine: step 2/3. Catalyzes the cleavage of L-kynurenine (L-Kyn) and L-3-hydroxykynurenine (L-3OHKyn) into anthranilic acid (AA) and 3-hydroxyanthranilic acid (3-OHAA), respectively. In Aspergillus clavatus (strain ATCC 1007 / CBS 513.65 / DSM 816 / NCTC 3887 / NRRL 1 / QM 1276 / 107), this protein is Kynureninase 2 (bna5-2).